Here is a 96-residue protein sequence, read N- to C-terminus: Cytochrome c-553 (96 aa).

The signal sequence occupies residues 1 to 19 (MKKVIMALGVLAFANALMA). Positions 29, 32, 33, and 73 each coordinate heme c.

This sequence belongs to the cytochrome c family. Binds 1 heme c group covalently per subunit.

It localises to the periplasm. Its function is as follows. Natural electron acceptor for a formate dehydrogenase. The sequence is that of Cytochrome c-553 from Helicobacter pylori (strain ATCC 700392 / 26695) (Campylobacter pylori).